The sequence spans 512 residues: Cytochrome P450 72A15 (512 aa).

A helical transmembrane segment spans residues 2–22 (EISVASVTISVVLAVVSWWIW). Residue Cys-460 participates in heme binding.

It belongs to the cytochrome P450 family. Requires heme as cofactor.

The protein localises to the membrane. In Arabidopsis thaliana (Mouse-ear cress), this protein is Cytochrome P450 72A15 (CYP72A15).